We begin with the raw amino-acid sequence, 282 residues long: Ermin (282 aa).

Composition is skewed to polar residues over residues M1–E12 and N21–R30. Residues M1 to G71 form a disordered region. Phosphoserine occurs at positions 72, 212, 224, 228, and 231. Over residues S212–S224 the composition is skewed to basic and acidic residues. Positions S212–G246 are disordered. Polar residues predominate over residues P225–G234. Position 235 is a phosphothreonine (T235). Residues K263 to L282 are binds actin.

Binds actin. In terms of tissue distribution, expressed specifically by the oligodendrocytes. Highest expression seen in the spinal cord followed by brainstem, cerebellum, thalamus, and hypothalamus. In the myelin sheath, found mainly in the abaxon and the lateral few terminal loops. Its apposition to the myelinated axon, through the latter, defines an axonal subregion, termed juxtanode, at the Ranvier node-paranode junction.

It localises to the cytoplasm. It is found in the cytoskeleton. Plays a role in cytoskeletal rearrangements during the late wrapping and/or compaction phases of myelinogenesis as well as in maintenance and stability of myelin sheath in the adult. May play an important role in late-stage oligodendroglia maturation, myelin/Ranvier node formation during CNS development, and in the maintenance and plasticity of related structures in the mature CNS. In Rattus norvegicus (Rat), this protein is Ermin (Ermn).